The following is a 426-amino-acid chain: Serine--tRNA ligase (426 aa).

An L-serine-binding site is contributed by 233 to 235 (TAE). 264 to 266 (RSE) is a binding site for ATP. Glu-287 contacts L-serine. 351–354 (EISS) is an ATP binding site. Ser-387 is a binding site for L-serine.

Belongs to the class-II aminoacyl-tRNA synthetase family. Type-1 seryl-tRNA synthetase subfamily. Homodimer. The tRNA molecule binds across the dimer.

It localises to the cytoplasm. It catalyses the reaction tRNA(Ser) + L-serine + ATP = L-seryl-tRNA(Ser) + AMP + diphosphate + H(+). The enzyme catalyses tRNA(Sec) + L-serine + ATP = L-seryl-tRNA(Sec) + AMP + diphosphate + H(+). It functions in the pathway aminoacyl-tRNA biosynthesis; selenocysteinyl-tRNA(Sec) biosynthesis; L-seryl-tRNA(Sec) from L-serine and tRNA(Sec): step 1/1. In terms of biological role, catalyzes the attachment of serine to tRNA(Ser). Is also able to aminoacylate tRNA(Sec) with serine, to form the misacylated tRNA L-seryl-tRNA(Sec), which will be further converted into selenocysteinyl-tRNA(Sec). The chain is Serine--tRNA ligase from Pseudomonas syringae pv. syringae (strain B728a).